The chain runs to 466 residues: Teichoic acids export ATP-binding protein TagH (466 aa).

In terms of domain architecture, ABC transporter spans 27 to 249 (NKAKSLIGSN…YEKFVQWFKK (223 aa)). 63–70 (GLNGAGKS) provides a ligand contact to ATP. A unknown region spans residues 250–466 (LPKKEQEKFK…TTEQSDGANQ (217 aa)). 2 disordered regions span residues 356-403 (NMTS…SNQN) and 439-466 (IHPG…GANQ). A compositionally biased stretch (basic residues) spans 373–384 (PKKKVSQAKKTT). Residues 385-403 (KVSSTQKNTSSSSSTSNQN) show a composition bias toward low complexity. Positions 403–447 (NTYIVQAGDSLSIIAENHGYSVEEIQQVNPGVDFSVIHPGQEINL) constitute a LysM domain. Polar residues predominate over residues 449–466 (EPTTSANSTTEQSDGANQ).

The protein belongs to the ABC transporter superfamily. Teichoic acids exporter (TC 3.A.1.104.1) family. In terms of assembly, the complex is composed of two ATP-binding proteins (TagH) and two transmembrane proteins (TagG).

It localises to the cell membrane. The catalysed reaction is ATP + H2O + teichoic acidSide 1 = ADP + phosphate + teichoic acidSide 2.. Functionally, part of the ABC transporter complex TagGH involved in teichoic acids export. Responsible for energy coupling to the transport system. The protein is Teichoic acids export ATP-binding protein TagH of Lactococcus lactis subsp. lactis (strain IL1403) (Streptococcus lactis).